Reading from the N-terminus, the 54-residue chain is Sec-independent protein translocase protein TatA (54 aa).

The helical transmembrane segment at Met1–Ala21 threads the bilayer.

Belongs to the TatA/E family. As to quaternary structure, the Tat system comprises two distinct complexes: a TatABC complex, containing multiple copies of TatA, TatB and TatC subunits, and a separate TatA complex, containing only TatA subunits. Substrates initially bind to the TatABC complex, which probably triggers association of the separate TatA complex to form the active translocon.

The protein localises to the cell inner membrane. In terms of biological role, part of the twin-arginine translocation (Tat) system that transports large folded proteins containing a characteristic twin-arginine motif in their signal peptide across membranes. TatA could form the protein-conducting channel of the Tat system. This is Sec-independent protein translocase protein TatA from Rickettsia canadensis (strain McKiel).